The following is a 179-amino-acid chain: Large ribosomal subunit protein uL5 (179 aa).

It belongs to the universal ribosomal protein uL5 family. In terms of assembly, part of the 50S ribosomal subunit; part of the 5S rRNA/L5/L18/L25 subcomplex. Contacts the 5S rRNA and the P site tRNA. Forms a bridge to the 30S subunit in the 70S ribosome.

Its function is as follows. This is one of the proteins that bind and probably mediate the attachment of the 5S RNA into the large ribosomal subunit, where it forms part of the central protuberance. In the 70S ribosome it contacts protein S13 of the 30S subunit (bridge B1b), connecting the 2 subunits; this bridge is implicated in subunit movement. Contacts the P site tRNA; the 5S rRNA and some of its associated proteins might help stabilize positioning of ribosome-bound tRNAs. The polypeptide is Large ribosomal subunit protein uL5 (Francisella tularensis subsp. tularensis (strain SCHU S4 / Schu 4)).